Reading from the N-terminus, the 187-residue chain is Aspartic protease inhibitor 9 (187 aa).

N-linked (GlcNAc...) asparagine glycosylation occurs at Asn19. 2 cysteine pairs are disulfide-bonded: Cys48–Cys93 and Cys142–Cys158.

The protein belongs to the protease inhibitor I3 (leguminous Kunitz-type inhibitor) family. In terms of processing, glycosylated. In terms of tissue distribution, tubers.

It localises to the vacuole. Its function is as follows. Inhibitor of cathepsin D (aspartic protease) and trypsin (serine protease). May protect the plant by inhibiting proteases of invading organisms. The protein is Aspartic protease inhibitor 9 of Solanum tuberosum (Potato).